A 1039-amino-acid polypeptide reads, in one-letter code: MQVLPPSSTGGPSRLFIMRPVATTLLMVAILLAGIIGYRALPVSALPEVDYPTIQVVTLYPGASPDVMTSAVTAPLERQFGQMSGLKQMSSQSSGGASVITLQFQLTLPLNVAEQEVQAAINAATNLLPSDLPNPPVYSKVNPADPPIMTLAVTSTAMPMTQVEDMVETRVAQKISQISGVGLVTLSGGQRPAVRVKLNAQAIAALGLTSETVRTAITGANVNSAKGSLDGPSRAVTLSANDQMQSAEEYRQLIIAYQNGAPIRLGDVATVEQGAENSWLGAWANKEQAIVMNVQRQPGANIISTADSIRQMLPQLTESLPKSVKVTVLSDRTTNIRASVDDTQFELMMAIALVVMIIYLFLRNIPATIIPGVAVPLSLIGTFAVMVFLDFSINNLTLMALTIATGFVVDDAIVVIENISRYIEKGEKPLAAALKGAGEIGFTIISLTFSLIAVLIPLLFMGDIVGRLFREFAITLAVAILISAVVSLTLTPMMCARMLSQESLRKQNRFSRASEKMFDRIIAAYGRGLAKVLNHPWLTLSVALSTLLLSVLLWVFIPKGFFPVQDNGIIQGTLQAPQSSSFANMAQRQRQVADVILQDPAVQSLTSFVGVDGTNPSLNSARLQINLKPLDERDDRVQKVIARLQTAVDKVPGVDLFLQPTQDLTIDTQVSRTQYQFTLQATSLDALSTWVPQLMEKLQQLPQLSDVSSDWQDKGLVAYVNVDRDSASRLGISMADVDNALYNAFGQRLISTIYTQANQYRVVLEHNTENTPGLAALDTIRLTSSDGGVVPLSSIAKIEQRFAPLSINHLDQFPVTTISFNVPDNYSLGHAVQAIMDTEKTLNLPVDITTQFGSTLAFQSALGSTVWLIVAAVVAMYIVLGILYESFIHPITILSTLPTAGVGALLALMIAGSELDVIAIIGIILLIGIVKKNAIMMIDFALAAEREQGMSPRDAIYQACLLRFRPILMTTLAALLGALPLMLSTGVGAELRRPLGIGMVGGLIVSQVLTLFTTPVIYLLFDRLALWTKSRFARHEEEA.

11 helical membrane passes run 15–37 (LFIM…GIIG), 345–362 (FELM…YLFL), 367–389 (ATII…MVFL), 396–418 (LTLM…VIEN), 438–460 (GEIG…PLLF), 472–494 (FAIT…TPMM), 535–557 (HPWL…WVFI), 866–888 (VWLI…ESFI), 908–930 (LMIA…IGIV), 967–989 (ILMT…GVGA), and 999–1021 (MVGG…YLLF).

Belongs to the resistance-nodulation-cell division (RND) (TC 2.A.6) family. MdtB subfamily. Part of a tripartite efflux system composed of MdtA, MdtB and MdtC. MdtB forms a heteromultimer with MdtC.

It is found in the cell inner membrane. The chain is Multidrug resistance protein MdtB from Shigella flexneri.